Reading from the N-terminus, the 356-residue chain is 3-dehydroquinate synthase (356 aa).

NAD(+) is bound by residues 106 to 110 (GVVGD), 130 to 131 (TS), lysine 143, lysine 152, and 170 to 173 (FLKT). Positions 185, 246, and 263 each coordinate Zn(2+).

The protein belongs to the sugar phosphate cyclases superfamily. Dehydroquinate synthase family. NAD(+) serves as cofactor. Requires Co(2+) as cofactor. The cofactor is Zn(2+).

It is found in the cytoplasm. The enzyme catalyses 7-phospho-2-dehydro-3-deoxy-D-arabino-heptonate = 3-dehydroquinate + phosphate. The protein operates within metabolic intermediate biosynthesis; chorismate biosynthesis; chorismate from D-erythrose 4-phosphate and phosphoenolpyruvate: step 2/7. Its function is as follows. Catalyzes the conversion of 3-deoxy-D-arabino-heptulosonate 7-phosphate (DAHP) to dehydroquinate (DHQ). This is 3-dehydroquinate synthase from Clostridium acetobutylicum (strain ATCC 824 / DSM 792 / JCM 1419 / IAM 19013 / LMG 5710 / NBRC 13948 / NRRL B-527 / VKM B-1787 / 2291 / W).